A 251-amino-acid polypeptide reads, in one-letter code: Probable transcriptional regulatory protein DET0444 (251 aa).

It belongs to the TACO1 family.

Its subcellular location is the cytoplasm. This is Probable transcriptional regulatory protein DET0444 from Dehalococcoides mccartyi (strain ATCC BAA-2266 / KCTC 15142 / 195) (Dehalococcoides ethenogenes (strain 195)).